The following is a 352-amino-acid chain: N-acetyl-gamma-glutamyl-phosphate reductase (352 aa).

Residue C155 is part of the active site.

Belongs to the NAGSA dehydrogenase family. Type 1 subfamily.

It localises to the cytoplasm. It catalyses the reaction N-acetyl-L-glutamate 5-semialdehyde + phosphate + NADP(+) = N-acetyl-L-glutamyl 5-phosphate + NADPH + H(+). It functions in the pathway amino-acid biosynthesis; L-arginine biosynthesis; N(2)-acetyl-L-ornithine from L-glutamate: step 3/4. In terms of biological role, catalyzes the NADPH-dependent reduction of N-acetyl-5-glutamyl phosphate to yield N-acetyl-L-glutamate 5-semialdehyde. This chain is N-acetyl-gamma-glutamyl-phosphate reductase, found in Brachyspira hyodysenteriae (strain ATCC 49526 / WA1).